We begin with the raw amino-acid sequence, 908 residues long: Oxysterol-binding protein 2 (908 aa).

The tract at residues 42–112 (SAFGSGPASK…GLWPGSENGT (71 aa)) is disordered. A compositionally biased stretch (polar residues) spans 81 to 90 (EPGSQTTSVP). A PH domain is found at 179 to 271 (LDSYKGWLLK…WITALELAKA (93 aa)). Disordered stretches follow at residues 279–299 (TQSDDSGDDDEEPAAPADNSE), 413–445 (RAFCNTPGGPASSSKSFSEGSFLTSKGENSEED), and 822–843 (LMERGRWDEANTEKQRLEEKQR). Residue Ser284 is modified to Phosphoserine. The span at 424–437 (SSSKSFSEGSFLTS) shows a compositional bias: low complexity.

It belongs to the OSBP family. In terms of assembly, interacts with CCDC159. Expressed in the testis (at protein level). Expressed in postmeiotic germ cells of the testis.

The protein localises to the membrane. It localises to the cytoplasmic vesicle. The protein resides in the secretory vesicle. It is found in the acrosome. Functionally, binds 7-ketocholesterol. Acts during spermatid development where its function is required prior to the removal of cytoplasm from the sperm head. The polypeptide is Oxysterol-binding protein 2 (Osbp2) (Mus musculus (Mouse)).